The primary structure comprises 124 residues: Acidic phospholipase A2 (124 aa).

7 disulfides stabilise this stretch: Cys-26/Cys-117, Cys-28/Cys-44, Cys-43/Cys-97, Cys-49/Cys-124, Cys-50/Cys-90, Cys-57/Cys-83, and Cys-77/Cys-88. The Ca(2+) site is built by Tyr-27, Gly-29, and Gly-31. His-47 is a catalytic residue. Ca(2+) is bound at residue Asp-48. The active site involves Glu-89.

This sequence belongs to the phospholipase A2 family. Group II subfamily. D49 sub-subfamily. It depends on Ca(2+) as a cofactor. In terms of tissue distribution, expressed by the venom gland.

The protein localises to the secreted. The catalysed reaction is a 1,2-diacyl-sn-glycero-3-phosphocholine + H2O = a 1-acyl-sn-glycero-3-phosphocholine + a fatty acid + H(+). Functionally, snake venom phospholipase A2 (PLA2) that inhibits collagen- and ADP-induced platelet aggregation. PLA2 catalyzes the calcium-dependent hydrolysis of the 2-acyl groups in 3-sn-phosphoglycerides. The sequence is that of Acidic phospholipase A2 from Bothrops jararaca (Jararaca).